The following is a 361-amino-acid chain: MESTEDEFYTICLNLTAEDPSFGNCNYTTDFENGELLEKVVSRVVPIFFGFIGIVGLVGNALVVLVVAANPGMRSTTNLLIINLAVADLLFVIFCVPFTATDYVMPRWPFGDWWCKVVQYFIVVTAHASVYTLVLMSLDRFMAVVHPIASMSIRTEKNALLAIACIWVVILTTAIPVGICHGEREYSYFNRNHSSCVFLEERGYSKLGFQMSFFLSSYVIPLALISVLYMCMLTRLWKSAPGGRVSAESRRGRKKVTRMVVVVVVVFAVCWCPIQIILLVKALNKYHITYFTVTAQIVSHVLAYMNSCVNPVLYAFLSENFRVAFRKVMYCPPPYNDGFSGRPQATKTTRTGNGNSCHDIV.

The Extracellular portion of the chain corresponds to 1–46 (MESTEDEFYTICLNLTAEDPSFGNCNYTTDFENGELLEKVVSRVVP). 2 N-linked (GlcNAc...) asparagine glycosylation sites follow: asparagine 14 and asparagine 26. The chain crosses the membrane as a helical span at residues 47–67 (IFFGFIGIVGLVGNALVVLVV). The Cytoplasmic portion of the chain corresponds to 68–78 (AANPGMRSTTN). The chain crosses the membrane as a helical span at residues 79-99 (LLIINLAVADLLFVIFCVPFT). At 100 to 116 (ATDYVMPRWPFGDWWCK) the chain is on the extracellular side. Residues cysteine 115 and cysteine 196 are joined by a disulfide bond. Residues 117-137 (VVQYFIVVTAHASVYTLVLMS) traverse the membrane as a helical segment. Residues 138–158 (LDRFMAVVHPIASMSIRTEKN) lie on the Cytoplasmic side of the membrane. A helical membrane pass occupies residues 159-179 (ALLAIACIWVVILTTAIPVGI). The Extracellular portion of the chain corresponds to 180-212 (CHGEREYSYFNRNHSSCVFLEERGYSKLGFQMS). Asparagine 192 carries an N-linked (GlcNAc...) asparagine glycan. Residues 213-233 (FFLSSYVIPLALISVLYMCML) traverse the membrane as a helical segment. Topologically, residues 234–259 (TRLWKSAPGGRVSAESRRGRKKVTRM) are cytoplasmic. The helical transmembrane segment at 260-280 (VVVVVVVFAVCWCPIQIILLV) threads the bilayer. Topologically, residues 281–296 (KALNKYHITYFTVTAQ) are extracellular. A helical membrane pass occupies residues 297 to 317 (IVSHVLAYMNSCVNPVLYAFL). Topologically, residues 318–361 (SENFRVAFRKVMYCPPPYNDGFSGRPQATKTTRTGNGNSCHDIV) are cytoplasmic. The interval 341–361 (GRPQATKTTRTGNGNSCHDIV) is disordered. Residues 343–361 (PQATKTTRTGNGNSCHDIV) are compositionally biased toward polar residues.

It belongs to the G-protein coupled receptor 1 family. In terms of tissue distribution, expressed in the midgut and, to a lesser extent, in the fore- and hindgut of fifth instar larvae. Also highly expressed in the brain of fourth and fifth instar larvae.

The protein resides in the cell membrane. Functionally, acts as a receptor for A-type allatostatin neuropeptide hormones. This is Allatostatin-A receptor from Bombyx mori (Silk moth).